We begin with the raw amino-acid sequence, 141 residues long: Lutropin subunit beta (141 aa).

The signal sequence occupies residues 1 to 18 (MGTLQGLLLWLLLGTGGA). Disulfide bonds link Cys-29-Cys-77, Cys-43-Cys-92, Cys-46-Cys-130, Cys-54-Cys-108, Cys-58-Cys-110, and Cys-113-Cys-120. Asn-33 carries an N-linked (GlcNAc...) asparagine glycan.

The protein belongs to the glycoprotein hormones subunit beta family. In terms of assembly, heterodimer of a common alpha chain and a unique beta chain which confers biological specificity to thyrotropin, lutropin, follitropin and gonadotropin.

The protein resides in the secreted. In terms of biological role, promotes spermatogenesis and ovulation by stimulating the testes and ovaries to synthesize steroids. The sequence is that of Lutropin subunit beta (LHB) from Oryctolagus cuniculus (Rabbit).